A 165-amino-acid chain; its full sequence is Mitochondrial fission process protein 1 (165 aa).

3 helical membrane-spanning segments follow: residues 35 to 55 (ALVP…YVTA), 76 to 96 (VCVC…SVAV), and 130 to 150 (IGLS…DLLL).

This sequence belongs to the MTFP1 family.

It localises to the mitochondrion inner membrane. In terms of biological role, involved in the mitochondrial division probably by regulating membrane fission. Loss-of-function leads to apoptosis. The chain is Mitochondrial fission process protein 1 (mtfp1) from Danio rerio (Zebrafish).